Consider the following 380-residue polypeptide: Cytochrome b (380 aa).

The next 4 helical transmembrane spans lie at 34-54 (FGSL…LLAM), 78-99 (WLIR…FLHI), 114-134 (WNTG…GYVL), and 179-199 (FFAL…IHLT). Residues H84 and H98 each coordinate heme b. Heme b-binding residues include H183 and H197. H202 serves as a coordination point for a ubiquinone. 4 consecutive transmembrane segments (helical) span residues 227-247 (IKDI…ALFS), 289-309 (LGGV…PFLH), 321-341 (LSQT…WIGS), and 348-368 (FIII…ILFP).

The protein belongs to the cytochrome b family. In terms of assembly, the cytochrome bc1 complex contains 11 subunits: 3 respiratory subunits (MT-CYB, CYC1 and UQCRFS1), 2 core proteins (UQCRC1 and UQCRC2) and 6 low-molecular weight proteins (UQCRH/QCR6, UQCRB/QCR7, UQCRQ/QCR8, UQCR10/QCR9, UQCR11/QCR10 and a cleavage product of UQCRFS1). This cytochrome bc1 complex then forms a dimer. Heme b is required as a cofactor.

It localises to the mitochondrion inner membrane. In terms of biological role, component of the ubiquinol-cytochrome c reductase complex (complex III or cytochrome b-c1 complex) that is part of the mitochondrial respiratory chain. The b-c1 complex mediates electron transfer from ubiquinol to cytochrome c. Contributes to the generation of a proton gradient across the mitochondrial membrane that is then used for ATP synthesis. This chain is Cytochrome b (MT-CYB), found in Alectoris rufa (Red-legged partridge).